The sequence spans 310 residues: Translocator protein BipD (310 aa).

Coiled coils occupy residues 127-171 (DPIL…LQDY) and 250-299 (DTAR…AIST).

Belongs to the invasin protein D family.

Its subcellular location is the secreted. Required for invasion of epithelial cells, as well as for survival within host cells, escape from endocytic vesicles and subsequent actin-tail formation. Probably regulates the secretion of effectors BipB and BipC and their final integration into the target cell membrane. The protein is Translocator protein BipD (bipD) of Burkholderia thailandensis (strain ATCC 700388 / DSM 13276 / CCUG 48851 / CIP 106301 / E264).